We begin with the raw amino-acid sequence, 506 residues long: Histidine ammonia-lyase (506 aa).

The 5-imidazolinone (Ala-Gly) cross-link spans 141–143 (ASG). S142 carries the 2,3-didehydroalanine (Ser) modification.

The protein belongs to the PAL/histidase family. In terms of processing, contains an active site 4-methylidene-imidazol-5-one (MIO), which is formed autocatalytically by cyclization and dehydration of residues Ala-Ser-Gly.

It localises to the cytoplasm. The catalysed reaction is L-histidine = trans-urocanate + NH4(+). It participates in amino-acid degradation; L-histidine degradation into L-glutamate; N-formimidoyl-L-glutamate from L-histidine: step 1/3. This chain is Histidine ammonia-lyase, found in Burkholderia multivorans (strain ATCC 17616 / 249).